The chain runs to 349 residues: Protein-glutamate methylesterase/protein-glutamine glutaminase (349 aa).

In terms of domain architecture, Response regulatory spans 5–122 (RVLSVDDSAL…REGMLAYSEM (118 aa)). Position 56 is a 4-aspartylphosphate (Asp-56). The CheB-type methylesterase domain maps to 152 to 344 (LLSSEKLIAI…QQMLAKISAG (193 aa)). Catalysis depends on residues Ser-164, His-190, and Asp-286.

It belongs to the CheB family. In terms of processing, phosphorylated by CheA. Phosphorylation of the N-terminal regulatory domain activates the methylesterase activity.

It is found in the cytoplasm. It catalyses the reaction [protein]-L-glutamate 5-O-methyl ester + H2O = L-glutamyl-[protein] + methanol + H(+). It carries out the reaction L-glutaminyl-[protein] + H2O = L-glutamyl-[protein] + NH4(+). In terms of biological role, involved in chemotaxis. Part of a chemotaxis signal transduction system that modulates chemotaxis in response to various stimuli. Catalyzes the demethylation of specific methylglutamate residues introduced into the chemoreceptors (methyl-accepting chemotaxis proteins or MCP) by CheR. Also mediates the irreversible deamidation of specific glutamine residues to glutamic acid. This Salmonella choleraesuis (strain SC-B67) protein is Protein-glutamate methylesterase/protein-glutamine glutaminase.